Here is a 182-residue protein sequence, read N- to C-terminus: Isopentenyl-diphosphate Delta-isomerase (182 aa).

2 residues coordinate Mn(2+): histidine 25 and histidine 32. In terms of domain architecture, Nudix hydrolase spans 30–164 (RLHLAFSSWL…PWAFSPWMVM (135 aa)). Cysteine 67 is an active-site residue. Histidine 69 serves as a coordination point for Mn(2+). Glutamate 87 contacts Mg(2+). Mn(2+)-binding residues include glutamate 114 and glutamate 116. The active site involves glutamate 116.

This sequence belongs to the IPP isomerase type 1 family. As to quaternary structure, homodimer. Requires Mg(2+) as cofactor. Mn(2+) is required as a cofactor.

The protein localises to the cytoplasm. The enzyme catalyses isopentenyl diphosphate = dimethylallyl diphosphate. Its pathway is isoprenoid biosynthesis; dimethylallyl diphosphate biosynthesis; dimethylallyl diphosphate from isopentenyl diphosphate: step 1/1. Functionally, catalyzes the 1,3-allylic rearrangement of the homoallylic substrate isopentenyl (IPP) to its highly electrophilic allylic isomer, dimethylallyl diphosphate (DMAPP). This Escherichia coli O139:H28 (strain E24377A / ETEC) protein is Isopentenyl-diphosphate Delta-isomerase.